We begin with the raw amino-acid sequence, 261 residues long: Enolase-phosphatase E1 (261 aa).

2 residues coordinate Mg(2+): Asp-16 and Glu-18. Substrate contacts are provided by residues 153–154 and Lys-187; that span reads SS. Asp-212 is a Mg(2+) binding site.

This sequence belongs to the HAD-like hydrolase superfamily. MasA/MtnC family. Monomer. Mg(2+) is required as a cofactor.

Its subcellular location is the cytoplasm. The protein localises to the nucleus. The catalysed reaction is 5-methylsulfanyl-2,3-dioxopentyl phosphate + H2O = 1,2-dihydroxy-5-(methylsulfanyl)pent-1-en-3-one + phosphate. The protein operates within amino-acid biosynthesis; L-methionine biosynthesis via salvage pathway; L-methionine from S-methyl-5-thio-alpha-D-ribose 1-phosphate: step 3/6. It functions in the pathway amino-acid biosynthesis; L-methionine biosynthesis via salvage pathway; L-methionine from S-methyl-5-thio-alpha-D-ribose 1-phosphate: step 4/6. Its function is as follows. Bifunctional enzyme that catalyzes the enolization of 2,3-diketo-5-methylthiopentyl-1-phosphate (DK-MTP-1-P) into the intermediate 2-hydroxy-3-keto-5-methylthiopentenyl-1-phosphate (HK-MTPenyl-1-P), which is then dephosphorylated to form the acireductone 1,2-dihydroxy-3-keto-5-methylthiopentene (DHK-MTPene). The chain is Enolase-phosphatase E1 (enoph1) from Salmo salar (Atlantic salmon).